Consider the following 125-residue polypeptide: Small ribosomal subunit protein uS12m (125 aa).

The tract at residues 1 to 24 (MPTSNQSIRHGREKKRRTDRTRAL) is disordered. Over residues 9 to 19 (RHGREKKRRTD) the composition is skewed to basic residues.

It belongs to the universal ribosomal protein uS12 family.

The protein resides in the mitochondrion. Protein S12 is involved in the translation initiation step. This is Small ribosomal subunit protein uS12m (RPS12) from Pinus sylvestris (Scotch pine).